A 409-amino-acid chain; its full sequence is Probable sodium/metabolite cotransporter BASS6, chloroplastic (409 aa).

The transit peptide at 1 to 49 (MSVITTPIETLHLKSTLRLLPRAVYRSQRIQVFPPNIFSNTSLSSPLRI) directs the protein to the chloroplast. 9 helical membrane passes run 100–120 (ILPH…PSFT), 121–141 (WFTS…VGIN), 170–190 (VLGF…TPIG), 191–211 (AGIM…ATFL), 221–241 (IVMT…LSLL), 253–273 (GMIS…LLLN), 285–305 (PFLP…PLAL), 316–336 (ATIL…GYFL), and 381–401 (IPPA…VLIW).

The protein belongs to the bile acid:sodium symporter (BASS) (TC 2.A.28) family.

The protein resides in the membrane. Its subcellular location is the plastid. The protein localises to the chloroplast envelope. Functionally, may function as sodium-coupled metabolite transporter across the chloroplast envelope. This is Probable sodium/metabolite cotransporter BASS6, chloroplastic (BASS6) from Arabidopsis thaliana (Mouse-ear cress).